Consider the following 216-residue polypeptide: Ras-related protein Rab-5C (216 aa).

Serine 30, alanine 31, glycine 33, lysine 34, serine 35, serine 36, histidine 47, glutamate 48, threonine 53, and glycine 79 together coordinate GTP. Position 35 (serine 35) interacts with Mg(2+). Short sequence motifs (switch) lie at residues 45 to 57 and 78 to 94; these read QFHEYQESTIGAA and AGQERYHSLAPMYYRGA. A Mg(2+)-binding site is contributed by threonine 53. Serine 85 is modified (phosphoserine; by LRRK2). GTP is bound by residues asparagine 134, lysine 135, aspartate 137, alanine 165, and lysine 166. Residues 185–216 form a disordered region; it reads NEPQNATGAPGRNRGVDLQENNPASRSQCCSN. Residues 203 to 216 show a composition bias toward polar residues; it reads QENNPASRSQCCSN. 2 S-geranylgeranyl cysteine lipidation sites follow: cysteine 213 and cysteine 214.

The protein belongs to the small GTPase superfamily. Rab family. In terms of assembly, interacts with EEA1. Interacts with INCA1. Interacts with GDI1, GDI2, CHML and CHM; phosphorylation at Ser-85 disrupts this interaction. Mg(2+) serves as cofactor. Post-translationally, phosphorylation of Ser-85 in the switch II region by LRRK2 prevents the association of RAB regulatory proteins, including CHM, CHML and RAB GDP dissociation inhibitors GDI1 and GDI2. (Microbial infection) Glycosylated on arginine residues by S.typhimurium protein Ssek3.

The protein localises to the cell membrane. Its subcellular location is the early endosome membrane. The protein resides in the melanosome. The enzyme catalyses GTP + H2O = GDP + phosphate + H(+). Its activity is regulated as follows. Regulated by guanine nucleotide exchange factors (GEFs) which promote the exchange of bound GDP for free GTP. Regulated by GTPase activating proteins (GAPs) which increase the GTP hydrolysis activity. Inhibited by GDP dissociation inhibitors (GDIs). Functionally, the small GTPases Rab are key regulators of intracellular membrane trafficking, from the formation of transport vesicles to their fusion with membranes. Rabs cycle between an inactive GDP-bound form and an active GTP-bound form that is able to recruit to membranes different sets of downstream effectors directly responsible for vesicle formation, movement, tethering and fusion. This Homo sapiens (Human) protein is Ras-related protein Rab-5C.